A 362-amino-acid polypeptide reads, in one-letter code: 3-dehydroquinate synthase (362 aa).

It belongs to the archaeal-type DHQ synthase family.

The enzyme catalyses 2-amino-2,3,7-trideoxy-D-lyxo-hept-6-ulosonate + NAD(+) + H2O = 3-dehydroquinate + NH4(+) + NADH + H(+). In terms of biological role, catalyzes the oxidative deamination and cyclization of 2-amino-3,7-dideoxy-D-threo-hept-6-ulosonic acid (ADH) to yield 3-dehydroquinate (DHQ), which is fed into the canonical shikimic pathway of aromatic amino acid biosynthesis. This Methanothrix thermoacetophila (strain DSM 6194 / JCM 14653 / NBRC 101360 / PT) (Methanosaeta thermophila) protein is 3-dehydroquinate synthase.